A 328-amino-acid polypeptide reads, in one-letter code: Serine protease 48 (328 aa).

The first 20 residues, 1–20, serve as a signal peptide directing secretion; that stretch reads MGPAGCAFTLLLLLGISVCG. Residues 28-267 form the Peptidase S1 domain; sequence VVGGQDAAAG…YQKWINATIS (240 aa). C53 and C69 are disulfide-bonded. Active-site charge relay system residues include H68 and D114. 3 disulfides stabilise this stretch: C148–C226, C181–C205, and C216–C244. The active-site Charge relay system is S220. The N-linked (GlcNAc...) asparagine glycan is linked to N263.

It belongs to the peptidase S1 family.

It localises to the secreted. The protein is Serine protease 48 (PRSS48) of Homo sapiens (Human).